The chain runs to 340 residues: Latency-related protein 1 (340 aa).

2 disordered regions span residues 13–96 (AALW…PNRQ) and 254–340 (RLPG…PPRP). Tandem repeats lie at residues 27–43 (PTPTHPHSHAPPLPRTP) and 59–75 (PTPTHPHSHAPPLPRTP). The 2 X 17 AA repeats stretch occupies residues 27 to 75 (PTPTHPHSHAPPLPRTPTPSHPHSRAPPLPRAPTPTHPHSHAPPLPRTP). A compositionally biased stretch (pro residues) spans 35–73 (HAPPLPRTPTPSHPHSRAPPLPRAPTPTHPHSHAPPLPR). Over residues 287-307 (ARGGGSGGGRGPGGGRGGPRG) the composition is skewed to gly residues. Basic residues predominate over residues 308-326 (SRGRGGRGRGGRGGGRRGR).

This is Latency-related protein 1 from Human herpesvirus 1 (strain F) (HHV-1).